We begin with the raw amino-acid sequence, 559 residues long: Potassium-transporting ATPase potassium-binding subunit (559 aa).

Transmembrane regions (helical) follow at residues Gly-5–Ser-25, Leu-27–Trp-47, Leu-63–Trp-83, Gly-132–Ile-152, Leu-170–Ile-190, Leu-253–Ala-273, Leu-283–Val-303, Phe-327–Val-347, Ala-356–Val-376, Gly-379–Gly-399, Met-416–Met-436, Leu-484–Ala-504, and Gly-524–Ile-544.

It belongs to the KdpA family. The system is composed of three essential subunits: KdpA, KdpB and KdpC.

Its subcellular location is the cell inner membrane. Functionally, part of the high-affinity ATP-driven potassium transport (or Kdp) system, which catalyzes the hydrolysis of ATP coupled with the electrogenic transport of potassium into the cytoplasm. This subunit binds the periplasmic potassium ions and delivers the ions to the membrane domain of KdpB through an intramembrane tunnel. The sequence is that of Potassium-transporting ATPase potassium-binding subunit from Salmonella typhi.